The chain runs to 185 residues: UPF0397 protein CPF_1836 (185 aa).

A run of 5 helical transmembrane segments spans residues 11–31 (IVAI…GSLP), 44–64 (AFLA…IGFI), 71–91 (IVFF…VGLI), 111–131 (IFMF…LVAP), and 149–169 (GVIG…ILIA).

This sequence belongs to the UPF0397 family.

Its subcellular location is the cell membrane. This is UPF0397 protein CPF_1836 from Clostridium perfringens (strain ATCC 13124 / DSM 756 / JCM 1290 / NCIMB 6125 / NCTC 8237 / Type A).